A 238-amino-acid polypeptide reads, in one-letter code: Sugar fermentation stimulation protein homolog (238 aa).

Belongs to the SfsA family.

The chain is Sugar fermentation stimulation protein homolog from Histophilus somni (strain 2336) (Haemophilus somnus).